A 211-amino-acid polypeptide reads, in one-letter code: Uridine kinase (211 aa).

12–19 (GGSGGGKT) lines the ATP pocket.

The protein belongs to the uridine kinase family.

The protein localises to the cytoplasm. It carries out the reaction uridine + ATP = UMP + ADP + H(+). It catalyses the reaction cytidine + ATP = CMP + ADP + H(+). The protein operates within pyrimidine metabolism; CTP biosynthesis via salvage pathway; CTP from cytidine: step 1/3. It participates in pyrimidine metabolism; UMP biosynthesis via salvage pathway; UMP from uridine: step 1/1. The chain is Uridine kinase from Streptococcus thermophilus (strain CNRZ 1066).